Reading from the N-terminus, the 431-residue chain is MANVVIVGAQWGDEGKGKVVDIYTEHADDVVRFQGGNNAGHTLVVGEETTILHLIPSGILHEGKRCIIGNGVVLDPKVFLEEIGQLKKKGYLKDDKQLVIDGNAHIIMPYHKALDIAREQKSGARKIGTTGRGIGPTYEDKVARRGIRVMDLVHPDTFVRKVKEMLPEKNFYLEQYLGGEPLSEEAIVEEYSVYARELAKYVDRASLLLNRSIAEGRNVLFEGAQGALLDIDHGTYPYVTSSSTVAGGACTGSGVGPTVIDEVVGIVKAYVTRVGEGPFPTELHDEMGEKLRSEGHEFGSTTGRPRRTGWFDAVAMREAVRISGMTGLALTKMDVLNGLDTINVCTAYSYQGELLEDFPHDLDILKECKPVYEQVEGWQVDLEGATSFETLPPKAQAYLRKIEEVSGCPVVLVSIGPRRDQTIQLKNPFDK.

Residues 12–18 and 40–42 contribute to the GTP site; these read GDEGKGK and GHT. The active-site Proton acceptor is D13. The Mg(2+) site is built by D13 and G40. Residues 13-16, 38-41, T130, R144, Q225, T240, and R304 contribute to the IMP site; these read DEGK and NAGH. Catalysis depends on H41, which acts as the Proton donor. 300 to 306 lines the substrate pocket; sequence STTGRPR. GTP contacts are provided by residues R306, 332-334, and 414-416; these read KMD and SIG.

The protein belongs to the adenylosuccinate synthetase family. In terms of assembly, homodimer. It depends on Mg(2+) as a cofactor.

The protein resides in the cytoplasm. It catalyses the reaction IMP + L-aspartate + GTP = N(6)-(1,2-dicarboxyethyl)-AMP + GDP + phosphate + 2 H(+). The protein operates within purine metabolism; AMP biosynthesis via de novo pathway; AMP from IMP: step 1/2. Functionally, plays an important role in the de novo pathway of purine nucleotide biosynthesis. Catalyzes the first committed step in the biosynthesis of AMP from IMP. The chain is Adenylosuccinate synthetase from Syntrophotalea carbinolica (strain DSM 2380 / NBRC 103641 / GraBd1) (Pelobacter carbinolicus).